The sequence spans 267 residues: MLLVLIDVDGFMGQLYNENGTQTILIPREAVIFYWEKNTAFNILQLFFHGGIDTIFEKTNQRSFSFQSRHIHHFTLDESPLPNSITLPTDTLQAFKACKKIIFQHLVKITKDHEQILLLHKGGPEGEWVRSFNIPNATVQNLNDLCCPSVEKLVLKKKDYISSSIGCPKHIQGSNHCPIFECHVLFKWIQENTFIAQGVLERSSLSYEEAVLFIEHRINMVDNHPFKKDSIKQNQKKKNWIATQFVQHGIYVDNGILTKIYNKYSLF.

Belongs to the asfivirus I267L family.

The polypeptide is Protein I267L (African swine fever virus (isolate Tick/Malawi/Lil 20-1/1983) (ASFV)).